The sequence spans 239 residues: Ribonuclease HII (239 aa).

The RNase H type-2 domain occupies 18-231 (KIIVGLDEAG…SKNLLKEIEE (214 aa)). A divalent metal cation is bound by residues D24, E25, and D125.

This sequence belongs to the RNase HII family. It depends on Mn(2+) as a cofactor. Requires Mg(2+) as cofactor.

The protein resides in the cytoplasm. The enzyme catalyses Endonucleolytic cleavage to 5'-phosphomonoester.. In terms of biological role, endonuclease that specifically degrades the RNA of RNA-DNA hybrids. The chain is Ribonuclease HII from Methanococcus maripaludis (strain C5 / ATCC BAA-1333).